A 105-amino-acid chain; its full sequence is Extracellular guanyl-specific ribonuclease Fl1 (105 aa).

2 cysteine pairs are disulfide-bonded: C5–C101 and C23–C82. Residue H39 is part of the active site. The active-site Proton acceptor is the E57. The Proton donor role is filled by H90.

The protein belongs to the ribonuclease N1/T1 family.

The catalysed reaction is [RNA] containing guanosine + H2O = an [RNA fragment]-3'-guanosine-3'-phosphate + a 5'-hydroxy-ribonucleotide-3'-[RNA fragment].. This is Extracellular guanyl-specific ribonuclease Fl1 from Gibberella baccata (Fusarium lateritium).